The following is a 483-amino-acid chain: Dihydrolipoyllysine-residue acetyltransferase component of pyruvate dehydrogenase complex, mitochondrial (483 aa).

Residues 1 to 28 (MLSANMLRRMHHGVAVTRMLLVSNGKVQ) constitute a mitochondrion transit peptide. The region spanning 53 to 129 (HTVINMPALS…PVGKPLAVTV (77 aa)) is the Lipoyl-binding domain. N6-lipoyllysine is present on lysine 94. 2 disordered regions span residues 143–187 (IEDS…DRVF) and 234–254 (EAAAKATTPAASAADAAAPGD). Residues 146 to 160 (SSAKEPSAKSGEEKS) are compositionally biased toward basic and acidic residues. The span at 161 to 178 (APSSEKQSKETSSPSNVS) shows a compositional bias: polar residues. The Peripheral subunit-binding (PSBD) domain maps to 187 to 224 (FASPLARKLAEEKDLDLSQIRGSGPNGRIIKVDIENFK). A compositionally biased stretch (low complexity) spans 235–252 (AAAKATTPAASAADAAAP). Catalysis depends on residues histidine 456 and aspartate 460.

This sequence belongs to the 2-oxoacid dehydrogenase family. (R)-lipoate serves as cofactor.

It is found in the mitochondrion matrix. It catalyses the reaction N(6)-[(R)-dihydrolipoyl]-L-lysyl-[protein] + acetyl-CoA = N(6)-[(R)-S(8)-acetyldihydrolipoyl]-L-lysyl-[protein] + CoA. Its function is as follows. The pyruvate dehydrogenase complex catalyzes the overall conversion of pyruvate to acetyl-CoA and CO(2). It contains multiple copies of three enzymatic components: pyruvate dehydrogenase (E1), dihydrolipoamide acetyltransferase (E2) and lipoamide dehydrogenase (E3). This chain is Dihydrolipoyllysine-residue acetyltransferase component of pyruvate dehydrogenase complex, mitochondrial, found in Schizosaccharomyces pombe (strain 972 / ATCC 24843) (Fission yeast).